The following is a 101-amino-acid chain: Small ribosomal subunit protein uS14 (101 aa).

Belongs to the universal ribosomal protein uS14 family. In terms of assembly, part of the 30S ribosomal subunit. Contacts proteins S3 and S10.

Binds 16S rRNA, required for the assembly of 30S particles and may also be responsible for determining the conformation of the 16S rRNA at the A site. This chain is Small ribosomal subunit protein uS14, found in Paraburkholderia phytofirmans (strain DSM 17436 / LMG 22146 / PsJN) (Burkholderia phytofirmans).